Consider the following 287-residue polypeptide: Mitochondrial glycine transporter B (287 aa).

3 Solcar repeats span residues 7 to 97, 104 to 188, and 198 to 282; these read HPAL…LKQH, PSAG…AKKA, and IAPL…LMAR. The next 6 helical transmembrane spans lie at 13-38, 72-98, 110-135, 163-186, 202-228, and 257-275; these read FMCGSLSGTCSTLLFQPLDLVKTRLQ, GVSPSFMRCIPGVGIYFSTFYSLKQHY, VLLGAGARCVAGVAMLPFTVIKTRFE, GLTATLLRDAPFSGIYVMFYSQAK, VNFGCGVVAGILASLATQPADVIKTHM, and GAVPRSLRRTLMAAMAWTV.

The protein belongs to the mitochondrial carrier (TC 2.A.29) family. SLC25A38 subfamily. In terms of tissue distribution, at 24 hours post-fertilization, expressed predominantly in posterior blood island, posterior cardinal vein and circulating blood. At 34 hours post-fertilization, becomes restricted to posterior blood island and circulating blood.

It is found in the mitochondrion inner membrane. It carries out the reaction glycine(in) = glycine(out). Its function is as follows. Mitochondrial glycine transporter that imports glycine into the mitochondrial matrix. Plays an important role in providing glycine for the first enzymatic step in heme biosynthesis, the condensation of glycine with succinyl-CoA to produce 5-aminolevulinate (ALA) in the mitochondrial matrix. Required during erythropoiesis. Functionally, may play a role as pro-apoptotic protein that induces caspase-dependent apoptosis. The protein is Mitochondrial glycine transporter B (slc25a38b) of Danio rerio (Zebrafish).